We begin with the raw amino-acid sequence, 138 residues long: Large ribosomal subunit protein uL16 (138 aa).

The protein belongs to the universal ribosomal protein uL16 family. Part of the 50S ribosomal subunit.

Its function is as follows. Binds 23S rRNA and is also seen to make contacts with the A and possibly P site tRNAs. The chain is Large ribosomal subunit protein uL16 from Chlamydia pneumoniae (Chlamydophila pneumoniae).